The primary structure comprises 318 residues: UAP56-interacting factor (318 aa).

Met1 is subject to N-acetylmethionine. Residues 1 to 25 (MNRFGTRLVGATATSSPPPKARSNE) are disordered. The residue at position 14 (Thr14) is a Phosphothreonine. A phosphoserine mark is found at Ser16 and Ser23. Positions 26–44 (NLDKIDMSLDDIIKLNRKE) match the UAP56-binding motif motif. Ser61 bears the Phosphoserine mark. The tract at residues 79-100 (GFGKTSLNRRGRVMPGKRRPNG) is disordered. Basic residues predominate over residues 85–98 (LNRRGRVMPGKRRP). A Phosphoserine modification is found at Ser118. Lys140 participates in a covalent cross-link: Glycyl lysine isopeptide (Lys-Gly) (interchain with G-Cter in SUMO1). A Glycyl lysine isopeptide (Lys-Gly) (interchain with G-Cter in SUMO2) cross-link involves residue Lys261.

This sequence belongs to the UIF family. In terms of assembly, interacts with CHTOP. Interacts with DDX39B/UAP56 and NXF1; interaction with DDX39B/UAP56 and NXF1 are mutually exclusive. Interacts with SSRP1; required for its recruitment to mRNAs. As to expression, expressed in a wide variety of cancer types.

The protein resides in the nucleus. It is found in the nucleoplasm. It localises to the nucleus speckle. Functionally, required for mRNA export from the nucleus to the cytoplasm. Acts as an adapter that uses the DDX39B/UAP56-NFX1 pathway to ensure efficient mRNA export and delivering to the nuclear pore. Associates with spliced and unspliced mRNAs simultaneously with ALYREF/THOC4. The sequence is that of UAP56-interacting factor (FYTTD1) from Homo sapiens (Human).